The sequence spans 168 residues: Photosystem I assembly protein Ycf3 (168 aa).

TPR repeat units lie at residues 35–68 (AFTYYRDGMSAQSEGNYAEALQNYYEAMRLEIDP), 72–105 (SYILYNIGLIHTSNGEHTKALEYYFRALERNPFL), and 120–153 (GEQAIQQGDSEIAEAWFDQAAEYWKQAIALTPGN).

The protein belongs to the Ycf3 family.

It is found in the plastid. The protein resides in the chloroplast thylakoid membrane. Functionally, essential for the assembly of the photosystem I (PSI) complex. May act as a chaperone-like factor to guide the assembly of the PSI subunits. This Solanum lycopersicum (Tomato) protein is Photosystem I assembly protein Ycf3.